A 380-amino-acid polypeptide reads, in one-letter code: Erythronate-4-phosphate dehydrogenase (380 aa).

Substrate-binding residues include Ser-45 and Thr-66. NAD(+) is bound by residues 126-127 (QV), Asp-146, Thr-174, 205-207 (ASR), and Asp-231. Residue Arg-207 is part of the active site. The active site involves Glu-236. The active-site Proton donor is His-253. Gly-256 contributes to the NAD(+) binding site. Residue Tyr-257 coordinates substrate.

Belongs to the D-isomer specific 2-hydroxyacid dehydrogenase family. PdxB subfamily. In terms of assembly, homodimer.

It is found in the cytoplasm. It carries out the reaction 4-phospho-D-erythronate + NAD(+) = (R)-3-hydroxy-2-oxo-4-phosphooxybutanoate + NADH + H(+). Its pathway is cofactor biosynthesis; pyridoxine 5'-phosphate biosynthesis; pyridoxine 5'-phosphate from D-erythrose 4-phosphate: step 2/5. Functionally, catalyzes the oxidation of erythronate-4-phosphate to 3-hydroxy-2-oxo-4-phosphonooxybutanoate. The protein is Erythronate-4-phosphate dehydrogenase of Pseudomonas savastanoi pv. phaseolicola (strain 1448A / Race 6) (Pseudomonas syringae pv. phaseolicola (strain 1448A / Race 6)).